We begin with the raw amino-acid sequence, 147 residues long: Hemoglobin subunit beta (147 aa).

Residues 3–147 (HWTPEEKQYI…VAHALALGYH (145 aa)) form the Globin domain. Heme b contacts are provided by His64 and His93.

Belongs to the globin family. In terms of assembly, heterotetramer of two alpha-D chains and two beta chains. In terms of tissue distribution, red blood cells.

In terms of biological role, involved in oxygen transport from the lung to the various peripheral tissues. The chain is Hemoglobin subunit beta (HBB) from Chelonoidis niger (Galapagos giant tortoise).